A 377-amino-acid polypeptide reads, in one-letter code: Stimulator of interferon genes protein 7 (377 aa).

Transmembrane regions (helical) follow at residues 30 to 50 (TAAI…FLAV), 57 to 77 (THFL…GELL), 106 to 126 (FTFD…LILC), and 141 to 161 (FAIL…LVGL).

The protein belongs to the STING family.

The protein localises to the membrane. In terms of biological role, facilitator of innate immune signaling that acts as a sensor of second messenger signals produced by cyclic GMP-AMP synthase-like receptors (cGLRs) and promotes the production of type I interferon. Innate immune response is triggered in response to nucleotides from viruses and bacteria delivered to the cytoplasm. Acts by binding cyclic dinucleotides: recognizes and binds a large variety of 2'-3'- and 3'-3' linked cyclic dinucleotides (2'-3'-cGAMP, 3'-3'-cGAMP, 2',3'-cUAMP, 3',3'-cUAMP and/or 3',3'-c-di-GMP) second messengers produced by cGLRs in response to nucleotides in the cytosol, such as double-stranded RNA (dsRNA). Upon binding to cyclic dinucleotides, oligomerizes and promotes the recruitment and subsequent activation of the transcription factor IRF3 to induce expression of type I interferon. The chain is Stimulator of interferon genes protein 7 from Stylophora pistillata (Smooth cauliflower coral).